The following is an 837-amino-acid chain: Intestinal mucin-like protein (837 aa).

4 tandem repeats follow at residues 17-27 (PSTPSTPPPST), 28-38 (PTTPTSSQTTT), 39-50 (PSTPSTTSSKST), and 51-62 (PSTPQSTSSKST). The segment at 17-70 (PSTPSTPPPSTPTTPTSSQTTTPSTPSTTSSKSTPSTPQSTSSKSTPSTPPKTT) is 5 X 11 AA approximate tandem repeats. Residues 17-75 (PSTPSTPPPSTPTTPTSSQTTTPSTPSTTSSKSTPSTPQSTSSKSTPSTPPKTTLPGCL) are disordered. Over residues 29-70 (TTPTSSQTTTPSTPSTTSSKSTPSTPQSTSSKSTPSTPPKTT) the composition is skewed to low complexity. A 5; truncated repeat occupies 63 to 70 (PSTPPKTT). Residues asparagine 91 and asparagine 164 are each glycosylated (N-linked (GlcNAc...) asparagine). A VWFD domain is found at 141-324 (CYCTGWGDPH…VNDPSKPHCP (184 aa)). 3 cysteine pairs are disulfide-bonded: cysteine 143/cysteine 284, cysteine 165/cysteine 323, and cysteine 189/cysteine 197. The segment at 149 to 837 (PHFVTFDGLY…RSSPRLLGRK (689 aa)) is probably important for disulfide-bond mediated mucin polymerization (link domain). Asparagine 278, asparagine 289, asparagine 344, asparagine 410, asparagine 444, asparagine 515, asparagine 538, asparagine 612, asparagine 627, asparagine 695, asparagine 727, and asparagine 749 each carry an N-linked (GlcNAc...) asparagine glycan. 2 consecutive VWFC domains span residues 472-543 (CGCV…TSCK) and 581-648 (GVCV…KKCQ). Disulfide bonds link cysteine 732-cysteine 779, cysteine 746-cysteine 793, cysteine 755-cysteine 809, and cysteine 759-cysteine 811. Positions 732-817 (CSAIPVMKEI…SCLCQGTVCE (86 aa)) constitute a CTCK domain.

As to quaternary structure, multimeric. As to expression, coats the epithelia of the intestines.

The protein localises to the secreted. The protein is Intestinal mucin-like protein of Rattus norvegicus (Rat).